The sequence spans 280 residues: Acetylglutamate kinase (280 aa).

Substrate contacts are provided by residues 64-65 (GG), Arg86, and Asn179.

Belongs to the acetylglutamate kinase family. ArgB subfamily.

It is found in the cytoplasm. It catalyses the reaction N-acetyl-L-glutamate + ATP = N-acetyl-L-glutamyl 5-phosphate + ADP. The protein operates within amino-acid biosynthesis; L-arginine biosynthesis; N(2)-acetyl-L-ornithine from L-glutamate: step 2/4. Its function is as follows. Catalyzes the ATP-dependent phosphorylation of N-acetyl-L-glutamate. The chain is Acetylglutamate kinase from Campylobacter fetus subsp. fetus (strain 82-40).